A 629-amino-acid polypeptide reads, in one-letter code: tRNA uridine 5-carboxymethylaminomethyl modification enzyme MnmG (629 aa).

FAD-binding positions include 14 to 19 (GAGHAG), Val-126, and Ser-181. An NAD(+)-binding site is contributed by 273–287 (GPRYCPSIEDKVVRF). Gln-370 serves as a coordination point for FAD.

Belongs to the MnmG family. As to quaternary structure, homodimer. Heterotetramer of two MnmE and two MnmG subunits. It depends on FAD as a cofactor.

The protein resides in the cytoplasm. NAD-binding protein involved in the addition of a carboxymethylaminomethyl (cmnm) group at the wobble position (U34) of certain tRNAs, forming tRNA-cmnm(5)s(2)U34. The protein is tRNA uridine 5-carboxymethylaminomethyl modification enzyme MnmG of Bacillus thuringiensis (strain Al Hakam).